A 929-amino-acid polypeptide reads, in one-letter code: Dual specificity protein phosphatase PHS1 (929 aa).

Disordered regions lie at residues 1–27 and 545–618; these read MAEPEKKRDQPFSQEKDEEKDLYLVHD and PESP…SLSS. Composition is skewed to basic and acidic residues over residues 552–580 and 591–606; these read HGHEVNHYPSPSKDRVPSDNSSDHSESDM and ENKEDGSSPKSRESWH. Residues 703-848 form the Tyrosine-protein phosphatase domain; the sequence is KPSMIQENLF…LINLDKKCHG (146 aa). Cysteine 792 functions as the Phosphocysteine intermediate in the catalytic mechanism. A substrate-binding site is contributed by 792 to 798; the sequence is CFEGRSR. Positions 903 to 911 match the Nuclear export signal motif; the sequence is QKALEALKL.

As to quaternary structure, interacts with MPK18. As to expression, expressed in roots, leaves and flowers.

Its subcellular location is the cytoplasm. The enzyme catalyses O-phospho-L-seryl-[protein] + H2O = L-seryl-[protein] + phosphate. It catalyses the reaction O-phospho-L-threonyl-[protein] + H2O = L-threonyl-[protein] + phosphate. It carries out the reaction O-phospho-L-tyrosyl-[protein] + H2O = L-tyrosyl-[protein] + phosphate. In terms of biological role, probable dual specificity phosphatase that binds and dephosphorylates MPK18, modulating the organization and dynamics of cortical microtubules. Acts as a negative regulator of abscisic acid (ABA) signaling during seed germination and light-induced stomata aperture. This Arabidopsis thaliana (Mouse-ear cress) protein is Dual specificity protein phosphatase PHS1 (PHS1).